We begin with the raw amino-acid sequence, 131 residues long: Translation initiation factor 5A (131 aa).

Lys-36 carries the post-translational modification Hypusine.

It belongs to the eIF-5A family.

The protein resides in the cytoplasm. Its function is as follows. Functions by promoting the formation of the first peptide bond. This chain is Translation initiation factor 5A, found in Sulfurisphaera tokodaii (strain DSM 16993 / JCM 10545 / NBRC 100140 / 7) (Sulfolobus tokodaii).